Consider the following 235-residue polypeptide: Claudin-16 (235 aa).

Residues 1–3 lie on the Cytoplasmic side of the membrane; that stretch reads MKD. A helical membrane pass occupies residues 4–24; that stretch reads LLQYAACFLAIFSTGFLIVAT. Residues 25 to 79 are Extracellular-facing; sequence RTDCWMVNADDSLEVSTKCRGLWWECVTNAFDGIRTCDEYDSIYAEHPLKLVVTR. A helical transmembrane segment spans residues 80 to 100; that stretch reads ALMITADILAGFGFITLLLGL. Over 101–115 the chain is Cytoplasmic; it reads DCVKFLPDEPHIKVR. A helical transmembrane segment spans residues 116 to 136; that stretch reads LCFVAGTVLLIAGTPGIIGSV. Residues 137-169 lie on the Extracellular side of the membrane; sequence WYAVDVYVERSSLVLHNIFLGIQYKFGWSCWLG. Residues 170 to 190 form a helical membrane-spanning segment; sequence MAGSLGCFLAGALLTCCLYLF. Residues 191-235 lie on the Cytoplasmic side of the membrane; that stretch reads KDVGPERNYPYAMRKPYSTAGVSMAKSYKAPRTETAKMYAVDTRV. Positions 233 to 235 match the Interaction with TJP1 motif; the sequence is TRV.

This sequence belongs to the claudin family. As to quaternary structure, can form heteropolymeric tight junction strands with other claudins. Interacts with CLDN19. Interacts (via PDZ-binding motif TRV) with TJP1 (via PDZ domain). Cannot form tight junction strands on its own.

It is found in the cell junction. It localises to the tight junction. The protein localises to the cell membrane. The catalysed reaction is Mg(2+)(in) = Mg(2+)(out). The enzyme catalyses Ca(2+)(in) = Ca(2+)(out). It catalyses the reaction Na(+)(in) = Na(+)(out). It carries out the reaction K(+)(in) = K(+)(out). The catalysed reaction is Rb(+)(in) = Rb(+)(out). The enzyme catalyses Cs(+)(in) = Cs(+)(out). It catalyses the reaction Li(+)(in) = Li(+)(out). Its function is as follows. Forms paracellular channels: coassembles with CLDN19 into tight junction strands with cation-selective channels through the strands, conveying epithelial permeability in a process known as paracellular tight junction permeability. Involved in the maintenance of ion gradients along the nephron. In the thick ascending limb (TAL) of Henle's loop, facilitates sodium paracellular permeability from the interstitial compartment to the lumen, contributing to the lumen-positive transepithelial potential that drives paracellular magnesium and calcium reabsorption. In Rattus norvegicus (Rat), this protein is Claudin-16.